Reading from the N-terminus, the 160-residue chain is Deoxyuridine 5'-triphosphate nucleotidohydrolase (160 aa).

Substrate contacts are provided by residues 72–74, Asn-85, and 89–91; these read RSG and TID.

It belongs to the dUTPase family. Requires Mg(2+) as cofactor.

It carries out the reaction dUTP + H2O = dUMP + diphosphate + H(+). It functions in the pathway pyrimidine metabolism; dUMP biosynthesis; dUMP from dCTP (dUTP route): step 2/2. In terms of biological role, this enzyme is involved in nucleotide metabolism: it produces dUMP, the immediate precursor of thymidine nucleotides and it decreases the intracellular concentration of dUTP so that uracil cannot be incorporated into DNA. This Methylocella silvestris (strain DSM 15510 / CIP 108128 / LMG 27833 / NCIMB 13906 / BL2) protein is Deoxyuridine 5'-triphosphate nucleotidohydrolase.